We begin with the raw amino-acid sequence, 130 residues long: Small ribosomal subunit protein uS9 (130 aa).

This sequence belongs to the universal ribosomal protein uS9 family.

This chain is Small ribosomal subunit protein uS9, found in Salmonella paratyphi C (strain RKS4594).